The following is a 210-amino-acid chain: Large ribosomal subunit protein bL17 (210 aa).

The segment at 177–210 (TRSAQRPAFEQDAPESDSAPEAEAKTEEETASAN) is disordered.

This sequence belongs to the bacterial ribosomal protein bL17 family. As to quaternary structure, part of the 50S ribosomal subunit. Contacts protein L32.

This Rhodopirellula baltica (strain DSM 10527 / NCIMB 13988 / SH1) protein is Large ribosomal subunit protein bL17.